A 143-amino-acid polypeptide reads, in one-letter code: uncharacterized protein (143 aa).

A helical transmembrane segment spans residues 65–85 (LVWMLVGTIVLSLDIIFPALV).

The protein resides in the membrane. This is an uncharacterized protein from Saccharomyces cerevisiae (strain ATCC 204508 / S288c) (Baker's yeast).